Consider the following 441-residue polypeptide: ATP-dependent protease ATPase subunit HslU (441 aa).

Residues Ile-18, 60–65 (GVGKTE), Asp-254, Glu-319, and Arg-391 contribute to the ATP site.

The protein belongs to the ClpX chaperone family. HslU subfamily. In terms of assembly, a double ring-shaped homohexamer of HslV is capped on each side by a ring-shaped HslU homohexamer. The assembly of the HslU/HslV complex is dependent on binding of ATP.

It is found in the cytoplasm. Its function is as follows. ATPase subunit of a proteasome-like degradation complex; this subunit has chaperone activity. The binding of ATP and its subsequent hydrolysis by HslU are essential for unfolding of protein substrates subsequently hydrolyzed by HslV. HslU recognizes the N-terminal part of its protein substrates and unfolds these before they are guided to HslV for hydrolysis. This is ATP-dependent protease ATPase subunit HslU from Shewanella piezotolerans (strain WP3 / JCM 13877).